Consider the following 24-residue polypeptide: Protein YriA (24 aa).

The protein is Protein YriA of Escherichia coli (strain K12).